A 276-amino-acid polypeptide reads, in one-letter code: BES1/BZR1 homolog protein 1 (276 aa).

3 disordered regions span residues 1 to 30 (MTAS…RERR), 76 to 125 (TTYR…PTRF), and 155 to 191 (SAPV…PTRR). The tract at residues 14 to 87 (RMPTWKEREN…YRKGSRPTET (74 aa)) is required for DNA-binding. Over residues 84–103 (PTETTVPCSSIQLSPQSSAF) the composition is skewed to polar residues. Residues 104-122 (QSPIPSYQASPSSSSYPSP) show a composition bias toward low complexity. T159 is subject to Phosphothreonine. The segment covering 164 to 174 (SPRRSNPRLPR) has biased composition (low complexity). The span at 175–189 (WQSSNFPVSAPSSPT) shows a compositional bias: polar residues.

Belongs to the BZR/LAT61 family. Phosphorylated. Phosphorylation increases protein degradation.

This is BES1/BZR1 homolog protein 1 (BEH1) from Arabidopsis thaliana (Mouse-ear cress).